Here is a 430-residue protein sequence, read N- to C-terminus: Asparagine--tRNA ligase (430 aa).

This sequence belongs to the class-II aminoacyl-tRNA synthetase family.

The protein localises to the cytoplasm. The enzyme catalyses tRNA(Asn) + L-asparagine + ATP = L-asparaginyl-tRNA(Asn) + AMP + diphosphate + H(+). In Thermococcus gammatolerans (strain DSM 15229 / JCM 11827 / EJ3), this protein is Asparagine--tRNA ligase.